The sequence spans 709 residues: Early transcription factor 82 kDa subunit (709 aa).

It belongs to the poxviridae VETF large subunit family. Heterodimer of a 70 kDa and a 82 kDa subunit. Part of the early transcription complex composed of ETF, RAP94, and the DNA-directed RNA polymerase.

It localises to the virion. In terms of biological role, acts with RNA polymerase to initiate transcription from early gene promoters. Is recruited by the RPO-associated protein of 94 kDa (RAP94) to form the early transcription complex, which also contains the core RNA polymerase. ETF heterodimer binds to early gene promoters. The protein is Early transcription factor 82 kDa subunit (VETFL) of Vertebrata (FPV).